We begin with the raw amino-acid sequence, 31 residues long: Antifungal protein 1 (31 aa).

Its subcellular location is the secreted. Functionally, antifungal activity against C.albicans ATCC 76615. This Musca domestica (House fly) protein is Antifungal protein 1.